The sequence spans 479 residues: Anaerobic nitric oxide reductase flavorubredoxin (479 aa).

The tract at residues 30–210 (LRGSSYNSYL…PFSRLVTPKI (181 aa)) is zinc metallo-hydrolase. Positions 79, 81, 83, 147, 166, and 227 each coordinate Fe cation. The Flavodoxin-like domain maps to 254–393 (ITIFYDTMSN…LCRQHGRDIA (140 aa)). FMN contacts are provided by residues 260-264 (TMSNN) and 342-369 (AFGS…EMSL). In terms of domain architecture, Rubredoxin-like spans 423–474 (GPKMQCSVCQWIYDPALGEPLQDVAPGTPWSDVPDNFLCPECSLGKDVFDVL). Residues C428, C431, C461, and C464 each coordinate Fe cation.

This sequence in the N-terminal section; belongs to the zinc metallo-hydrolase group 3 family. As to quaternary structure, homotetramer. Fe cation is required as a cofactor. The cofactor is FMN.

It localises to the cytoplasm. The protein operates within nitrogen metabolism; nitric oxide reduction. Anaerobic nitric oxide reductase; uses NADH to detoxify nitric oxide (NO), protecting several 4Fe-4S NO-sensitive enzymes. Has at least 2 reductase partners, only one of which (NorW, flavorubredoxin reductase) has been identified. NO probably binds to the di-iron center; electrons enter from the NorW at rubredoxin and are transferred sequentially to the FMN center and the di-iron center. Also able to function as an aerobic oxygen reductase. The protein is Anaerobic nitric oxide reductase flavorubredoxin of Salmonella typhi.